The sequence spans 73 residues: Homeodomain-only protein (73 aa).

Positions 3–62 (AQTASGPTEDQVEILEYNFNKVNKHPDPTTLCLIAAEAGLTEEQTQKWFKQRLAEWRRSE) form a DNA-binding region, homeobox; degenerate.

In terms of assembly, interacts with serum response factor (SRF). Component of a large complex containing histone deacetylases such as HDAC2. Interacts with the acetylated forms of HSPA1A and HSPA1B. Interacts with HSPA8. Expressed in the embryonic and adult heart and in the adult brain, liver, lung, skeletal muscle, intestine and spleen. Throughout embryonic and postnatal development, it is expressed in the myocardium.

It is found in the nucleus. Its subcellular location is the cytoplasm. Atypical homeodomain protein which does not bind DNA and is required to modulate cardiac growth and development. Acts via its interaction with SRF, thereby modulating the expression of SRF-dependent cardiac-specific genes and cardiac development. Prevents SRF-dependent transcription either by inhibiting SRF binding to DNA or by recruiting histone deacetylase (HDAC) proteins that prevent transcription by SRF. Overexpression causes cardiac hypertrophy. Acts as a co-chaperone for HSPA1A and HSPA1B chaperone proteins and assists in chaperone-mediated protein refolding. The sequence is that of Homeodomain-only protein (Hopx) from Mus musculus (Mouse).